The following is a 599-amino-acid chain: Elongation factor 4 (599 aa).

The region spanning 3 to 185 (KNIRNFSIIA…AIVERIPPPS (183 aa)) is the tr-type G domain. GTP is bound by residues 15 to 20 (DHGKST) and 132 to 135 (NKID).

Belongs to the TRAFAC class translation factor GTPase superfamily. Classic translation factor GTPase family. LepA subfamily.

Its subcellular location is the cell membrane. It catalyses the reaction GTP + H2O = GDP + phosphate + H(+). Required for accurate and efficient protein synthesis under certain stress conditions. May act as a fidelity factor of the translation reaction, by catalyzing a one-codon backward translocation of tRNAs on improperly translocated ribosomes. Back-translocation proceeds from a post-translocation (POST) complex to a pre-translocation (PRE) complex, thus giving elongation factor G a second chance to translocate the tRNAs correctly. Binds to ribosomes in a GTP-dependent manner. The polypeptide is Elongation factor 4 (Syntrophomonas wolfei subsp. wolfei (strain DSM 2245B / Goettingen)).